Here is a 137-residue protein sequence, read N- to C-terminus: Nucleoside diphosphate kinase (137 aa).

Positions 9, 57, 85, 91, 102, and 112 each coordinate ATP. Histidine 115 functions as the Pros-phosphohistidine intermediate in the catalytic mechanism.

This sequence belongs to the NDK family. Homotetramer. Mg(2+) is required as a cofactor.

It localises to the cytoplasm. It carries out the reaction a 2'-deoxyribonucleoside 5'-diphosphate + ATP = a 2'-deoxyribonucleoside 5'-triphosphate + ADP. The catalysed reaction is a ribonucleoside 5'-diphosphate + ATP = a ribonucleoside 5'-triphosphate + ADP. Its function is as follows. Major role in the synthesis of nucleoside triphosphates other than ATP. The ATP gamma phosphate is transferred to the NDP beta phosphate via a ping-pong mechanism, using a phosphorylated active-site intermediate. The protein is Nucleoside diphosphate kinase of Campylobacter concisus (strain 13826).